The sequence spans 341 residues: Anthranilate phosphoribosyltransferase (341 aa).

Residues Gly82, 85-86 (GD), Thr90, 92-95 (NIST), 110-118 (KHGNRAITS), and Thr122 each bind 5-phospho-alpha-D-ribose 1-diphosphate. Gly82 provides a ligand contact to anthranilate. Ser94 is a binding site for Mg(2+). Anthranilate is bound at residue Asn113. Arg168 contributes to the anthranilate binding site. Asp226 and Glu227 together coordinate Mg(2+).

It belongs to the anthranilate phosphoribosyltransferase family. Homodimer. It depends on Mg(2+) as a cofactor.

The enzyme catalyses N-(5-phospho-beta-D-ribosyl)anthranilate + diphosphate = 5-phospho-alpha-D-ribose 1-diphosphate + anthranilate. It functions in the pathway amino-acid biosynthesis; L-tryptophan biosynthesis; L-tryptophan from chorismate: step 2/5. Its function is as follows. Catalyzes the transfer of the phosphoribosyl group of 5-phosphorylribose-1-pyrophosphate (PRPP) to anthranilate to yield N-(5'-phosphoribosyl)-anthranilate (PRA). The chain is Anthranilate phosphoribosyltransferase from Caulobacter vibrioides (strain ATCC 19089 / CIP 103742 / CB 15) (Caulobacter crescentus).